The primary structure comprises 860 residues: Leucine-rich repeat and death domain-containing protein 1 (860 aa).

Residues 1-103 form a disordered region; the sequence is MSEKEGMSEV…TGTSQSLSSL (103 aa). Residues 50–72 show a composition bias toward polar residues; it reads KSSNQIYETHPRQNTLESTSSSG. Residues 90 to 103 are compositionally biased toward low complexity; that stretch reads TSTRTGTSQSLSSL. LRR repeat units lie at residues 139–163, 164–186, 187–210, 211–233, 235–256, 257–279, 281–302, 303–325, 326–348, 350–371, 372–394, 396–417, 419–440, 441–463, 465–486, 487–510, 512–532, 533–555, 557–578, 579–601, 603–624, 627–650, 651–673, 675–696, 697–719, and 721–742; these read LGADNFTVNLEAKGLQEFPKDILKI, KYVKYLYLDKNQIKTFQGADSGD, LLGLEILSLQENGLSSLPSEIQLL, HNLRILNVSHNHISHIPKEISQL, NIRQLFFYNNYIENFPSDLECL, GNLEILSLGKNKLRHIPDTLPSL, TLRVLNLEYNQLTTFPKALCFL, PKLISLDLTGNLISSLPKEIREL, KNLETLLMDHNKLTFLAVEIFQL, KIKELQLADNKLEVISHKIENF, RELRILILDKNLLKNIPEKISCC, MLECLSLSDNKLTELPKYIHKL, NLRKLHVNRNNMVKITDCISHL, NNICSLEFSGNIITDVPIEIKNC, KIIKIELSYNKIMYFPLGLCAL, DSLYYLSVNGNYISEIPVDISFSK, LLHLELSENKLLIFSEHFCSL, INLKYLDLGKNQIKKIPASISNM, SLHVLILCCNKFETFPRELCTL, ENLQVLDLSENQLQKISSDICNL, GIQKLNFSSNQFIHFPIELCQL, LEQLNISQIKGRKLTRLPGELSNM, TQLKELDISNNAIREIPRNIGEL, NLVSLHAYNNQISYLPPSLLSL, NDLQQLNLSGNNLTALPSAIYNI, and SLKEINFDDNPLLRPPVEICKG. Positions 764-852 constitute a Death domain; sequence EKIFKIVANN…EIMDKITALN (89 aa). The LRR 27 repeat unit spans residues 856–860; sequence RAIKF.

The sequence is that of Leucine-rich repeat and death domain-containing protein 1 (LRRD1) from Homo sapiens (Human).